The chain runs to 828 residues: Deubiquitinase MYSM1 (828 aa).

The span at 1-12 (MAAEEADVDIEG) shows a compositional bias: acidic residues. A disordered region spans residues 1 to 31 (MAAEEADVDIEGDVVAAAGAQPGSGENTASV). S110 carries the post-translational modification Phosphoserine. The 52-residue stretch at 116–167 (SYSVKWTIEEKELFEQGLAKFGRRWTKISKLIGSRTVLQVKSYARQYFKNKV) folds into the SANT domain. K187 participates in a covalent cross-link: Glycyl lysine isopeptide (Lys-Gly) (interchain with G-Cter in SUMO2). Position 218 is a phosphoserine (S218). Residue T236 is modified to Phosphothreonine. S242, S267, and S340 each carry phosphoserine. Residues 372–470 (LKPPEQEIEI…FGCEQAVYNR (99 aa)) enclose the SWIRM domain. The MPN domain occupies 577–709 (VKVASEALLI…PLPYSQITCL (133 aa)). Zn(2+) is bound by residues H656, H658, and D669. Residues 656–669 (HSHPAFDPNPSLRD) carry the JAMM motif motif. Positions 774-778 (LQKLL) match the LXXLL motif motif.

This sequence belongs to the peptidase M67A family. MYSM1 subfamily. As to quaternary structure, component of a large chromatin remodeling complex, at least composed of MYSM1, PCAF, RBM10 and KIF11/TRIP5. Binds histones. Interacts with NFIL3; this interaction is critical for their correct recruitment to the ID2 locus during natural killer cell maturation.

It localises to the nucleus. It is found in the cytoplasm. In terms of biological role, metalloprotease with deubiquitinase activity that plays important regulator roles in hematopoietic stem cell function, blood cell production and immune response. Participates in the normal programming of B-cell responses to antigen after the maturation process. Within the cytoplasm, plays critical roles in the repression of innate immunity and autoimmunity. Removes 'Lys-63'-linked polyubiquitins from TRAF3 and TRAF6 complexes. Attenuates NOD2-mediated inflammation and tissue injury by promoting 'Lys-63'-linked deubiquitination of RIPK2 component. Suppresses the CGAS-STING1 signaling pathway by cleaving STING1 'Lys-63'-linked ubiquitin chains. In the nucleus, acts as a hematopoietic transcription regulator derepressing a range of genes essential for normal stem cell differentiation including EBF1 and PAX5 in B-cells, ID2 in NK-cell progenitor or FLT3 in dendritic cell precursors. Deubiquitinates monoubiquitinated histone H2A, a specific tag for epigenetic transcriptional repression, leading to dissociation of histone H1 from the nucleosome. This chain is Deubiquitinase MYSM1 (MYSM1), found in Homo sapiens (Human).